A 429-amino-acid polypeptide reads, in one-letter code: MLDIRALRQDGEAIKAALSKRGYTLDLEEFAALDAKRKQADMRSQELQADRKKASKQVGELIKSGMAVDEAKAQVADALQTIDTELDKEVASAKAIQDEIREYLMGIPNVPQEAVPAGNDEDDNVEVRRWGTPKTLPFEPKDHVDIGEALEGGLDFERAAKLSGARFAVMSGGLARMHRALIDFMLDIHSDEHGYQEVYVPFLVGPEALRGTGQLPKFAEDLFKIEGERELYLIPTAEVPVTNLAADEILEANTMPRRYTCHTPCFRSEAGSHGRDTRGMIRQHQFEKVELVQMVRPEESDAALEALTGHAEAILQKLDLPYRVVILCGGDLGFSSSKTYDIEVWLPSQQCYREISSCSNFRDYQSRRMQARWRNPETGKPELVHTLNGSALAVGRTLVAILENYQNDDGSVTVPEALRPYMRGLERLK.

236–238 (TAE) provides a ligand contact to L-serine. 267-269 (RSE) serves as a coordination point for ATP. Glutamate 290 lines the L-serine pocket. 354-357 (EISS) lines the ATP pocket. Residue serine 390 coordinates L-serine.

The protein belongs to the class-II aminoacyl-tRNA synthetase family. Type-1 seryl-tRNA synthetase subfamily. In terms of assembly, homodimer. The tRNA molecule binds across the dimer.

It is found in the cytoplasm. It carries out the reaction tRNA(Ser) + L-serine + ATP = L-seryl-tRNA(Ser) + AMP + diphosphate + H(+). The catalysed reaction is tRNA(Sec) + L-serine + ATP = L-seryl-tRNA(Sec) + AMP + diphosphate + H(+). It functions in the pathway aminoacyl-tRNA biosynthesis; selenocysteinyl-tRNA(Sec) biosynthesis; L-seryl-tRNA(Sec) from L-serine and tRNA(Sec): step 1/1. Its function is as follows. Catalyzes the attachment of serine to tRNA(Ser). Is also able to aminoacylate tRNA(Sec) with serine, to form the misacylated tRNA L-seryl-tRNA(Sec), which will be further converted into selenocysteinyl-tRNA(Sec). The polypeptide is Serine--tRNA ligase (Alcanivorax borkumensis (strain ATCC 700651 / DSM 11573 / NCIMB 13689 / SK2)).